A 115-amino-acid chain; its full sequence is Non-specific lipid-transfer protein Cor a 8.0101 (115 aa).

The first 23 residues, 1 to 23, serve as a signal peptide directing secretion; sequence MGSLKLVCAVLLCMMVAAPVARA. 4 disulfides stabilise this stretch: cysteine 27–cysteine 74, cysteine 37–cysteine 51, cysteine 52–cysteine 97, and cysteine 72–cysteine 111.

It belongs to the plant LTP family. As to quaternary structure, monomer. As to expression, expressed in seed (at protein level). Expressed in seed.

Plant non-specific lipid-transfer proteins transfer phospholipids as well as galactolipids across membranes. May play a role in wax or cutin deposition in the cell walls of expanding epidermal cells and certain secretory tissues. This is Non-specific lipid-transfer protein Cor a 8.0101 from Corylus avellana (European hazel).